The sequence spans 294 residues: uncharacterized protein (294 aa).

Positions 181-204 (DEPFPTTKNHNNDKRETNDKDDQQ) are disordered. Basic and acidic residues predominate over residues 190-204 (HNNDKRETNDKDDQQ).

The protein belongs to the IIV-6 391R family.

This is an uncharacterized protein from Acheta domesticus (House cricket).